The chain runs to 525 residues: Ribosomal protein S6 kinase beta-1 (525 aa).

Residues 28-32 carry the TOS motif motif; sequence FDIDL. The segment covering 32-46 has biased composition (acidic residues); sequence LDQPEDAGSEDELEE. Residues 32-54 are disordered; it reads LDQPEDAGSEDELEEGGQLNESM. In terms of domain architecture, Protein kinase spans 91–352; sequence FELLRVLGKG…AGEVQAHPFF (262 aa). ATP is bound by residues 97–105 and Lys-123; that span reads LGKGGYGKV. Asp-218 (proton acceptor) is an active-site residue. Phosphothreonine; by PDPK1 is present on Thr-252. The region spanning 353–423 is the AGC-kinase C-terminal domain; the sequence is RHINWEELLA…VAPSVLESVK (71 aa). Residues 380–399 are disordered; the sequence is SQFDSKFTRQTPVDSPDDST. A compositionally biased stretch (polar residues) spans 381–399; that stretch reads QFDSKFTRQTPVDSPDDST. A Phosphoserine modification is found at Ser-394. Thr-412 carries the phosphothreonine; by MTOR, NEK6 and NEK7 modification. Positions 424–525 are autoinhibitory domain; it reads EKFSFEPKIR…KRPEHLRMNL (102 aa). Phosphoserine is present on residues Ser-434 and Ser-441. Thr-444 carries the post-translational modification Phosphothreonine. A phosphoserine mark is found at Ser-447 and Ser-452. Lys-516 carries the post-translational modification N6-acetyllysine.

It belongs to the protein kinase superfamily. AGC Ser/Thr protein kinase family. S6 kinase subfamily. In terms of assembly, interacts with PPP1R9A/neurabin-1. Interacts with RPTOR. Interacts with IRS1. Interacts with EIF3B and EIF3C. Interacts with TRAF4. Interacts with POLDIP3. Interacts (via N-terminus) with IER5. Post-translationally, phosphorylation at Thr-412 is regulated by mTORC1. The phosphorylation at this site is maintained by an agonist-dependent autophosphorylation mechanism. Activated by phosphorylation at Thr-252 by PDPK1. Dephosphorylation by PPP1CC at Thr-412 in mitochondrion.

It is found in the cytoplasm. The protein localises to the synapse. Its subcellular location is the synaptosome. It localises to the mitochondrion outer membrane. The protein resides in the mitochondrion. The enzyme catalyses L-seryl-[protein] + ATP = O-phospho-L-seryl-[protein] + ADP + H(+). It catalyses the reaction L-threonyl-[protein] + ATP = O-phospho-L-threonyl-[protein] + ADP + H(+). Activation requires multiple phosphorylation events on serine/threonine residues. Activation appears to be first mediated by phosphorylation of multiple sites in the autoinhibitory domain, which facilitates phosphorylation at Thr-412, disrupting the autoinhibitory mechanism and allowing phosphorylation of Thr-252 by PDPK1. The active conformation of the kinase is believed to be stabilized by a mechanism involving three conserved phosphorylation sites located in the kinase domain activation loop (Thr-252) and in the AGC-kinase C-terminal domain (Ser-394 in the middle of the tail/linker region and Thr-412 within a hydrophobic motif at its end). Activated by mTORC1; isoform Alpha I and isoform Alpha II are sensitive to rapamycin, which inhibits activating phosphorylation at Thr-412. Activated by PDPK1. Its function is as follows. Serine/threonine-protein kinase that acts downstream of mTOR signaling in response to growth factors and nutrients to promote cell proliferation, cell growth and cell cycle progression. Regulates protein synthesis through phosphorylation of EIF4B, RPS6 and EEF2K, and contributes to cell survival by repressing the pro-apoptotic function of BAD. Under conditions of nutrient depletion, the inactive form associates with the EIF3 translation initiation complex. Upon mitogenic stimulation, phosphorylation by the mechanistic target of rapamycin complex 1 (mTORC1) leads to dissociation from the EIF3 complex and activation. The active form then phosphorylates and activates several substrates in the pre-initiation complex, including the EIF2B complex and the cap-binding complex component EIF4B. Also controls translation initiation by phosphorylating a negative regulator of EIF4A, PDCD4, targeting it for ubiquitination and subsequent proteolysis. Promotes initiation of the pioneer round of protein synthesis by phosphorylating POLDIP3/SKAR. In response to IGF1, activates translation elongation by phosphorylating EEF2 kinase (EEF2K), which leads to its inhibition and thus activation of EEF2. Also plays a role in feedback regulation of mTORC2 by mTORC1 by phosphorylating MAPKAP1/SIN1, MTOR and RICTOR, resulting in the inhibition of mTORC2 and AKT1 signaling. Also involved in feedback regulation of mTORC1 and mTORC2 by phosphorylating DEPTOR. Mediates cell survival by phosphorylating the pro-apoptotic protein BAD and suppressing its pro-apoptotic function. Phosphorylates mitochondrial URI1 leading to dissociation of a URI1-PPP1CC complex. The free mitochondrial PPP1CC can then dephosphorylate RPS6KB1 at Thr-412, which is proposed to be a negative feedback mechanism for the RPS6KB1 anti-apoptotic function. Mediates TNF-alpha-induced insulin resistance by phosphorylating IRS1 at multiple serine residues, resulting in accelerated degradation of IRS1. In cells lacking functional TSC1-2 complex, constitutively phosphorylates and inhibits GSK3B. May be involved in cytoskeletal rearrangement through binding to neurabin. Phosphorylates and activates the pyrimidine biosynthesis enzyme CAD, downstream of MTOR. Following activation by mTORC1, phosphorylates EPRS and thereby plays a key role in fatty acid uptake by adipocytes and also most probably in interferon-gamma-induced translation inhibition. This chain is Ribosomal protein S6 kinase beta-1 (Rps6kb1), found in Mus musculus (Mouse).